Reading from the N-terminus, the 329-residue chain is uncharacterized protein (329 aa).

Helical transmembrane passes span 5–24 (NLLL…FLTV), 34–56 (IAVA…YLIF), 92–114 (FGYI…LEWG), 124–146 (IIFF…VLFY), 159–181 (SANF…LLSL), 196–218 (TAHR…LQYL), 231–253 (FSIV…LGAY), 263–285 (LIGV…RLFG), and 306–328 (FWLF…RILT).

The protein localises to the cell membrane. This is an uncharacterized protein from Archaeoglobus fulgidus (strain ATCC 49558 / DSM 4304 / JCM 9628 / NBRC 100126 / VC-16).